A 385-amino-acid polypeptide reads, in one-letter code: Neuropeptide Y receptor type 2 (385 aa).

The Extracellular segment spans residues 1-54; that stretch reads MGPLEAIGEENQTDEMKMELFTKLYLPRYTTPVSELALDPKPELKDSTTLVEVQ. N-linked (GlcNAc...) asparagine glycosylation occurs at Asn11. A helical transmembrane segment spans residues 55–75; it reads IILIFAYCSIILLGVIGNSLV. Residues 76-90 lie on the Cytoplasmic side of the membrane; sequence IHVIIKFKSMRTVTN. The helical transmembrane segment at 91–111 threads the bilayer; the sequence is FFIANLAVADLLVNTLCLPFT. Residues 112 to 128 lie on the Extracellular side of the membrane; the sequence is LVYTLLGEWKLGPVLCH. A disulfide bridge connects residues Cys127 and Cys207. Residues 129–149 traverse the membrane as a helical segment; sequence LVPYAQALAVHVSTVTLTVIA. Over 150-169 the chain is Cytoplasmic; it reads LDRHRCIVYHLESKISKRIS. Residues 170 to 190 traverse the membrane as a helical segment; the sequence is FLIIGVAWAVSALLASPLAIF. Topologically, residues 191–221 are extracellular; that stretch reads REYSLIEIIPDFKIVVCSEKWPGEGQLNYGT. A helical transmembrane segment spans residues 222 to 242; that stretch reads IYSVSMLLIQYVLPLAIISYA. Residues 243 to 273 lie on the Cytoplasmic side of the membrane; sequence YTRIWTKLKNHVSPGAGNDHYHHRRQKTTKM. A helical membrane pass occupies residues 274 to 294; sequence LVCVVVVFAVSWLPFHAFQLV. Over 295 to 308 the chain is Extracellular; it reads SDIDSQVLDLKEYK. The chain crosses the membrane as a helical span at residues 309–329; sequence LIYTVFHVIAMCSTFANPLLY. At 330–385 the chain is on the cytoplasmic side; that stretch reads GWMNNNYRTAFLTAFQCEQRLDSIHPEVSAAFKARKKLEAKKSQFPGDSFTQPTNV. The S-palmitoyl cysteine moiety is linked to residue Cys346.

This sequence belongs to the G-protein coupled receptor 1 family.

It is found in the cell membrane. Functionally, receptor for neuropeptide Y and peptide YY. This Gallus gallus (Chicken) protein is Neuropeptide Y receptor type 2 (NPY2R).